The sequence spans 435 residues: Tol-Pal system protein TolB (435 aa).

Residues 1–20 form the signal peptide; the sequence is MRKIIAGVFIFVFLISNLYA.

The protein belongs to the TolB family. The Tol-Pal system is composed of five core proteins: the inner membrane proteins TolA, TolQ and TolR, the periplasmic protein TolB and the outer membrane protein Pal. They form a network linking the inner and outer membranes and the peptidoglycan layer.

It is found in the periplasm. Functionally, part of the Tol-Pal system, which plays a role in outer membrane invagination during cell division and is important for maintaining outer membrane integrity. This Francisella tularensis subsp. holarctica (strain LVS) protein is Tol-Pal system protein TolB.